The following is a 157-amino-acid chain: Small ribosomal subunit protein bS16 (157 aa).

The segment at 114 to 157 (NEGPTAEAITEKKKKAKEEAAAKAAAEAEAAAKAEEAPAEEAAE) is disordered.

The protein belongs to the bacterial ribosomal protein bS16 family.

The chain is Small ribosomal subunit protein bS16 from Corynebacterium diphtheriae (strain ATCC 700971 / NCTC 13129 / Biotype gravis).